Reading from the N-terminus, the 327-residue chain is MAMACLCLANISWATVCANSTGVAEDEHYDLSNIFNSTNNQPGQIVVLPEKSGWVGVSAICPPGTLVNYTYRSYVTNFIVQETIDNYKYMQLHDYLLGAMSLVDSVMDIQFPPQNYIRMGTDPNVSQNLPFGVMDSRLIFRLKVIRPFINMVEIPRQVMFTVYVTSTPYDPLVTPVYTISFGGRVEVPQNCELNAGQIVEFDFGDIGASLFSAAGPGNRPAGVMPQTKSIAVKCTNVAAQAYLTMRLEASAVSGQAMVSDNQDLGFIVADQNDTPITPNDLNSVIPFRLDAAAAANVTLRAWPISITGQKPTEGPFSALGYLRVDYQ.

Residues 1–24 form the signal peptide; that stretch reads MAMACLCLANISWATVCANSTGVA.

It belongs to the fimbrial protein family.

It is found in the fimbrium. Its function is as follows. Part of the sfmACDHF fimbrial operon. Could contribute to adhesion to various surfaces in specific environmental niches. Increases adhesion to eukaryotic T24 bladder epithelial cells in the absence of fim genes. This is an uncharacterized protein from Escherichia coli (strain K12).